We begin with the raw amino-acid sequence, 184 residues long: Uroplakin-2 (184 aa).

An N-terminal signal peptide occupies residues 1 to 25 (MASPLPVRTLPLILILLAVLAPGAS). Residues 26 to 84 (DFNISSLSGPLSPALTESLLVALPPCHLTGGNATLMVRRANDSKVVKSSFMVPPCRGRR) constitute a propeptide that is removed on maturation. 3 N-linked (GlcNAc...) asparagine glycosylation sites follow: asparagine 28, asparagine 57, and asparagine 66. Over 85-155 (ELVSVVDSGS…IGLGMARTGG (71 aa)) the chain is Lumenal. Residues 156–180 (MVVITVLLSVAMFLLVVGFITALAL) form a helical membrane-spanning segment. The Cytoplasmic segment spans residues 181-184 (GARK).

It belongs to the uroplakin-2 family. In terms of assembly, interacts with uroplakin-1a (UPK1A). As to expression, expressed only in the urothelium. Localizes to urothelial superficial cells.

The protein resides in the cell membrane. Its function is as follows. Component of the asymmetric unit membrane (AUM); a highly specialized biomembrane elaborated by terminally differentiated urothelial cells. May play an important role in regulating the assembly of the AUM. This Sus scrofa (Pig) protein is Uroplakin-2 (UPK2).